The following is a 517-amino-acid chain: 2-isopropylmalate synthase (517 aa).

Positions 6–267 (IIVFDTTLRD…YTTINTPEIY (262 aa)) constitute a Pyruvate carboxyltransferase domain. Mn(2+) is bound by residues aspartate 15, histidine 201, histidine 203, and asparagine 237. The regulatory domain stretch occupies residues 393-517 (DLIGLQISDC…RLSKSSEHQV (125 aa)).

The protein belongs to the alpha-IPM synthase/homocitrate synthase family. LeuA type 1 subfamily. As to quaternary structure, homodimer. Mn(2+) is required as a cofactor.

Its subcellular location is the cytoplasm. The catalysed reaction is 3-methyl-2-oxobutanoate + acetyl-CoA + H2O = (2S)-2-isopropylmalate + CoA + H(+). It functions in the pathway amino-acid biosynthesis; L-leucine biosynthesis; L-leucine from 3-methyl-2-oxobutanoate: step 1/4. Its function is as follows. Catalyzes the condensation of the acetyl group of acetyl-CoA with 3-methyl-2-oxobutanoate (2-ketoisovalerate) to form 3-carboxy-3-hydroxy-4-methylpentanoate (2-isopropylmalate). This is 2-isopropylmalate synthase from Aliarcobacter butzleri (strain RM4018) (Arcobacter butzleri).